A 261-amino-acid chain; its full sequence is 3beta-hydroxysteroid dehydrogenase 1 (261 aa).

Residues 65–66 (DV), Asn92, Tyr158, and Lys162 contribute to the NAD(+) site. The active-site Proton acceptor is the Tyr158.

The protein belongs to the short-chain dehydrogenases/reductases (SDR) family.

It carries out the reaction 3-oxo-5beta-cholan-24-oate + NADH + H(+) = isolithocholate + NAD(+). It catalyses the reaction 12alpha-hydroxy-3-oxo-5beta-cholan-24-oate + NADH + H(+) = isodeoxycholate + NAD(+). The catalysed reaction is 7alpha,12alpha-dihydroxy-3-oxo-5beta-cholan-24-oate + NADH + H(+) = isocholate + NAD(+). The enzyme catalyses 3-oxochenodeoxycholate + NADH + H(+) = isochenodeoxycholate + NAD(+). Involved in the modification of secondary bile acids into iso-bile acids (3beta-bile acids) via epimerization of the 3-OH group through a 3-oxo-intermediate. Catalyzes the reduction of 12-alpha-hydroxy-3-oxo-5-beta-cholan-24-oate (3-oxo-DCA) and 3-oxo-5-beta-cholan-24-oate (3-oxo-LCA) to yield isodeoxycholate (isoDCA) and isolithocholate (isoLCA), respectively. Is also able to catalyze the reduction of 3-dehydrocholate (3-oxo-CA or 7alpha,12alpha-dihydroxy-3-oxo-5beta-cholan-24-oate) and 7-alpha-hydroxy-3-oxo-5-beta-cholan-24-oate (3-oxo-CDCA), into isocholate (isoCA) and isochenodeoxycholate (isoCDCA), respectively. Prefers NADH to NADPH as cosubstrate. The conversion of the abundant bile acid deoxycholate (DCA) into isoDCA by the gut bacterium E.lenta favors the growth of the keystone commensal genus Bacteroides, since isoDCA is less cytotoxic than its parent compound, DCA; iso-bile acids have thus a potential role in modulating gut community composition. The protein is 3beta-hydroxysteroid dehydrogenase 1 of Eggerthella lenta (strain ATCC 25559 / DSM 2243 / CCUG 17323 / JCM 9979 / KCTC 3265 / NCTC 11813 / VPI 0255 / 1899 B) (Eubacterium lentum).